The primary structure comprises 606 residues: Threonine--tRNA ligase (606 aa).

Residues 212-503 (DHRKLGVEMK…LIEHTAGELP (292 aa)) are catalytic. Zn(2+) is bound by residues cysteine 304, histidine 355, and histidine 480.

It belongs to the class-II aminoacyl-tRNA synthetase family. In terms of assembly, homodimer. The cofactor is Zn(2+).

Its subcellular location is the cytoplasm. It carries out the reaction tRNA(Thr) + L-threonine + ATP = L-threonyl-tRNA(Thr) + AMP + diphosphate + H(+). Catalyzes the attachment of threonine to tRNA(Thr) in a two-step reaction: L-threonine is first activated by ATP to form Thr-AMP and then transferred to the acceptor end of tRNA(Thr). Also edits incorrectly charged L-seryl-tRNA(Thr). This is Threonine--tRNA ligase from Campylobacter curvus (strain 525.92).